The chain runs to 740 residues: ATP-dependent RNA helicase DDX1 (740 aa).

The necessary for interaction with HNRNPK stretch occupies residues 1-295 (MAAFSEMGVM…APKALIVEPS (295 aa)). An interaction with dsRNA region spans residues 1 to 448 (MAAFSEMGVM…DTVHHVVVPV (448 aa)). Residues 1–525 (MAAFSEMGVM…KIDCDNLEQY (525 aa)) are necessary for interaction with RELA. The region spanning 2–428 (AAFSEMGVMP…SEKIMHFPTW (427 aa)) is the Helicase ATP-binding domain. Position 46–53 (46–53 (AETGSGKT)) interacts with ATP. Positions 70 to 247 (DQQEGKKGKA…LKFNFGEEEF (178 aa)) constitute a B30.2/SPRY domain. N6-acetyllysine occurs at positions 239 and 268. K281 carries the post-translational modification N6-acetyllysine; alternate. K281 participates in a covalent cross-link: Glycyl lysine isopeptide (Lys-Gly) (interchain with G-Cter in SUMO2); alternate. The DEAD box signature appears at 370 to 373 (DEAD). The residue at position 481 (S481) is a Phosphoserine. One can recognise a Helicase C-terminal domain in the interval 493–681 (KGEYAVRAIK…QVEPDIKVPV (189 aa)). The necessary for interaction with HNRNPK stretch occupies residues 525 to 740 (YFMQQGGGPD…YLPNQLFRTF (216 aa)).

It belongs to the DEAD box helicase family. DDX1 subfamily. As to quaternary structure, found in a multi-helicase-TICAM1 complex at least composed of DHX36, DDX1, DDX21 and TICAM1; this complex exists in resting cells with or without poly(I:C) RNA ligand stimulation. Interacts with DHX36. Interacts (via B30.2/SPRY domain) with DDX21 (via N-terminus); this interaction serves as bridges to TICAM1. Interacts with FAM98A (via N- and C-terminus). Interacts with PHF5A (via C-terminus). Interacts with MBNL1. Interacts with CSTF2. Interacts with HNRNPK. Interacts with ATM. Interacts with RELA (via C-terminus). Component of the tRNA-splicing ligase complex. Interacts with PQBP1. Interacts with ERCC6. Post-translationally, phosphorylated by ATM kinase; phosphorylation is increased in response to ionizing radiation (IR).

The protein localises to the nucleus. The protein resides in the cytoplasm. It is found in the cytoplasmic granule. It localises to the cytosol. Its subcellular location is the mitochondrion. It carries out the reaction ATP + H2O = ADP + phosphate + H(+). Acts as an ATP-dependent RNA helicase, able to unwind both RNA-RNA and RNA-DNA duplexes. Possesses 5' single-stranded RNA overhang nuclease activity. Possesses ATPase activity on various RNA, but not DNA polynucleotides. May play a role in RNA clearance at DNA double-strand breaks (DSBs), thereby facilitating the template-guided repair of transcriptionally active regions of the genome. Together with RELA, acts as a coactivator to enhance NF-kappa-B-mediated transcriptional activation. Acts as a positive transcriptional regulator of cyclin CCND2 expression. Binds to the cyclin CCND2 promoter region. Associates with chromatin at the NF-kappa-B promoter region via association with RELA. Binds to poly(A) RNA. May be involved in 3'-end cleavage and polyadenylation of pre-mRNAs. Component of the tRNA-splicing ligase complex required to facilitate the enzymatic turnover of catalytic subunit RTCB: together with archease (ZBTB8OS), acts by facilitating the guanylylation of RTCB, a key intermediate step in tRNA ligation. Component of a multi-helicase-TICAM1 complex that acts as a cytoplasmic sensor of viral double-stranded RNA (dsRNA) and plays a role in the activation of a cascade of antiviral responses including the induction of pro-inflammatory cytokines via the adapter molecule TICAM1. Specifically binds (via helicase ATP-binding domain) on both short and long poly(I:C) dsRNA. This Rattus norvegicus (Rat) protein is ATP-dependent RNA helicase DDX1 (Ddx1).